The sequence spans 228 residues: tRNA (guanine-N(1)-)-methyltransferase (228 aa).

S-adenosyl-L-methionine contacts are provided by residues Gly-111 and 130-135 (IGDFVL).

The protein belongs to the RNA methyltransferase TrmD family. Homodimer.

The protein localises to the cytoplasm. The enzyme catalyses guanosine(37) in tRNA + S-adenosyl-L-methionine = N(1)-methylguanosine(37) in tRNA + S-adenosyl-L-homocysteine + H(+). Functionally, specifically methylates guanosine-37 in various tRNAs. This chain is tRNA (guanine-N(1)-)-methyltransferase, found in Ureaplasma parvum serovar 3 (strain ATCC 27815 / 27 / NCTC 11736).